The following is a 234-amino-acid chain: Glucosamine-6-phosphate deaminase (234 aa).

Catalysis depends on aspartate 62, which acts as the Proton acceptor; for enolization step. Asparagine 128 (for ring-opening step) is an active-site residue. Residue histidine 130 is the Proton acceptor; for ring-opening step of the active site. Residue glutamate 135 is the For ring-opening step of the active site.

The protein belongs to the glucosamine/galactosamine-6-phosphate isomerase family. NagB subfamily.

The enzyme catalyses alpha-D-glucosamine 6-phosphate + H2O = beta-D-fructose 6-phosphate + NH4(+). Its pathway is amino-sugar metabolism; N-acetylneuraminate degradation; D-fructose 6-phosphate from N-acetylneuraminate: step 5/5. In terms of biological role, catalyzes the reversible isomerization-deamination of glucosamine 6-phosphate (GlcN6P) to form fructose 6-phosphate (Fru6P) and ammonium ion. In Streptococcus equi subsp. zooepidemicus (strain H70), this protein is Glucosamine-6-phosphate deaminase.